Reading from the N-terminus, the 543-residue chain is Hydroxylamine reductase (543 aa).

[4Fe-4S] cluster contacts are provided by C5, C8, C17, and C23. Hybrid [4Fe-2O-2S] cluster is bound by residues H236, E260, C304, C398, C426, C451, E486, and K488. A Cysteine persulfide modification is found at C398.

Belongs to the HCP family. Requires [4Fe-4S] cluster as cofactor. The cofactor is hybrid [4Fe-2O-2S] cluster.

It is found in the cytoplasm. It carries out the reaction A + NH4(+) + H2O = hydroxylamine + AH2 + H(+). Functionally, catalyzes the reduction of hydroxylamine to form NH(3) and H(2)O. The sequence is that of Hydroxylamine reductase from Bacteroides fragilis (strain YCH46).